Consider the following 125-residue polypeptide: PCNA-associated factor (125 aa).

A disordered region spans residues 1–125 (MVRTKADSAG…SEEAADSDDE (125 aa)). Residues 8–17 (SAGSSASSGS) are compositionally biased toward low complexity. Positions 28 to 39 (RKTFGSSSSGSN) match the D-box motif. Residues 68–79 (QKGIGEFFGSPS) carry the PIP-box motif. Positions 85–87 (KEN) match the KEN box motif. The Initiation motif signature appears at 95-107 (EAGGSGAGKAPRK). Over residues 115 to 125 (PSEEAADSDDE) the composition is skewed to acidic residues.

As to quaternary structure, interacts with pcna.

It is found in the nucleus. Its subcellular location is the cytoplasm. It localises to the perinuclear region. PCNA-binding protein that acts as a regulator of DNA repair during DNA replication. Following DNA damage, the interaction with pcna is disrupted, facilitating the interaction between monoubiquitinated pcna and the translesion DNA synthesis DNA polymerase eta (polh) at stalled replisomes, facilitating the bypass of replication-fork-blocking lesions. Also acts as a regulator of centrosome number. In Xenopus tropicalis (Western clawed frog), this protein is PCNA-associated factor.